The chain runs to 573 residues: Glutamate--tRNA ligase (573 aa).

Residues proline 106 to asparagine 116 carry the 'HIGH' region motif.

It belongs to the class-I aminoacyl-tRNA synthetase family. Glutamate--tRNA ligase type 2 subfamily.

Its subcellular location is the cytoplasm. It catalyses the reaction tRNA(Glu) + L-glutamate + ATP = L-glutamyl-tRNA(Glu) + AMP + diphosphate. Functionally, catalyzes the attachment of glutamate to tRNA(Glu) in a two-step reaction: glutamate is first activated by ATP to form Glu-AMP and then transferred to the acceptor end of tRNA(Glu). This Thermococcus onnurineus (strain NA1) protein is Glutamate--tRNA ligase.